The primary structure comprises 437 residues: Testis-specific Y-encoded-like protein 1 (437 aa).

Positions 1–81 are disordered; the sequence is MSGLDGVKRT…QDAAGRGGTP (81 aa). Residues 11-26 show a composition bias toward polar residues; that stretch reads TPLQTHSIIISDQVPS. Residues 28–40 show a composition bias toward basic and acidic residues; the sequence is QDAHQYLRLRDQS. Lys-156 participates in a covalent cross-link: Glycyl lysine isopeptide (Lys-Gly) (interchain with G-Cter in SUMO2).

Belongs to the nucleosome assembly protein (NAP) family. Post-translationally, ubiquitinated by the CRL2(APPBP2) complex, which recognizes the Arg-Xaa-Xaa-Gly sequence at the C-terminus, leading to its degradation. In terms of tissue distribution, expressed in testis, ovary, liver, spleen, brain, kidney, prostate, lung, liver, and heart.

It localises to the nucleus. The protein localises to the nucleolus. This chain is Testis-specific Y-encoded-like protein 1 (TSPYL1), found in Homo sapiens (Human).